The chain runs to 157 residues: Protein Smg homolog (157 aa).

It belongs to the Smg family.

This Shewanella putrefaciens (strain CN-32 / ATCC BAA-453) protein is Protein Smg homolog.